An 897-amino-acid polypeptide reads, in one-letter code: Protein SAP1 (897 aa).

5 disordered regions span residues 112–144, 195–219, 302–398, 413–438, and 456–561; these read EEPAPRNDMPSSKTYTNHSSSFTRSTEPPPVFQ, PSKPLSNNASRQHKNPIEHNDPPLK, QMSD…TKST, SKSNTKPIIKSNASSPTSSLTVPNSV, and KKVA…REEP. Over residues 120–137 the composition is skewed to polar residues; the sequence is MPSSKTYTNHSSSFTRST. Basic and acidic residues predominate over residues 209-219; sequence NPIEHNDPPLK. The segment covering 307 to 321 has biased composition (low complexity); sequence SVTSSTSSNKSVSSS. Residues 364-380 show a composition bias toward polar residues; that stretch reads LETSTTMDSSKIRNPQI. The span at 468–478 shows a compositional bias: basic residues; the sequence is KKSHPILKSKT. Over residues 480–496 the composition is skewed to low complexity; the sequence is KVPNSSSKKTSSHPSRP. Positions 497 to 523 are enriched in polar residues; sequence VSNSKPYSHGASQNKKPSKNQTTSMSK. Ser-536 is modified (phosphoserine). Residue 645 to 652 coordinates ATP; that stretch reads GPPGTGKT.

Belongs to the AAA ATPase family. In terms of assembly, interacts with SPT2/SIN1.

In Saccharomyces cerevisiae (strain ATCC 204508 / S288c) (Baker's yeast), this protein is Protein SAP1 (SAP1).